A 109-amino-acid polypeptide reads, in one-letter code: Large ribosomal subunit protein uL22 (109 aa).

It belongs to the universal ribosomal protein uL22 family. In terms of assembly, part of the 50S ribosomal subunit.

Functionally, this protein binds specifically to 23S rRNA; its binding is stimulated by other ribosomal proteins, e.g. L4, L17, and L20. It is important during the early stages of 50S assembly. It makes multiple contacts with different domains of the 23S rRNA in the assembled 50S subunit and ribosome. The globular domain of the protein is located near the polypeptide exit tunnel on the outside of the subunit, while an extended beta-hairpin is found that lines the wall of the exit tunnel in the center of the 70S ribosome. The protein is Large ribosomal subunit protein uL22 of Aromatoleum aromaticum (strain DSM 19018 / LMG 30748 / EbN1) (Azoarcus sp. (strain EbN1)).